The primary structure comprises 338 residues: Lipoate-protein ligase A (338 aa).

The BPL/LPL catalytic domain maps to 29 to 216; the sequence is PATQRVLFLW…AFFAHYGERI (188 aa). Residues R71, 76–79, and K134 contribute to the ATP site; that span reads GAVF. Residue K134 participates in (R)-lipoate binding.

It belongs to the LplA family. In terms of assembly, monomer.

It is found in the cytoplasm. The catalysed reaction is L-lysyl-[lipoyl-carrier protein] + (R)-lipoate + ATP = N(6)-[(R)-lipoyl]-L-lysyl-[lipoyl-carrier protein] + AMP + diphosphate + H(+). It participates in protein modification; protein lipoylation via exogenous pathway; protein N(6)-(lipoyl)lysine from lipoate: step 1/2. The protein operates within protein modification; protein lipoylation via exogenous pathway; protein N(6)-(lipoyl)lysine from lipoate: step 2/2. Functionally, catalyzes both the ATP-dependent activation of exogenously supplied lipoate to lipoyl-AMP and the transfer of the activated lipoyl onto the lipoyl domains of lipoate-dependent enzymes. The polypeptide is Lipoate-protein ligase A (Salmonella typhi).